The sequence spans 150 residues: Photosystem I reaction center subunit XI (150 aa).

At 1 to 72 the chain is on the stromal side; it reads MSDFIQSYNN…DKLGPLRNTD (72 aa). The chain crosses the membrane as a helical span at residues 73–93; that stretch reads VALLSGFLSAVGLIIILTVCL. Residues 94-118 lie on the Lumenal side of the membrane; the sequence is SMYGNVSFDKDDAKDLLQTTEGWGQ. A helical membrane pass occupies residues 119-139; sequence FTAGFLVGAVGGSGFAYLLLA. The Stromal segment spans residues 140-150; the sequence is NIPVLQNLGLS.

Belongs to the PsaL family.

The protein resides in the plastid. The protein localises to the chloroplast thylakoid membrane. This chain is Photosystem I reaction center subunit XI, found in Gracilaria tenuistipitata var. liui (Red alga).